Here is a 443-residue protein sequence, read N- to C-terminus: Light-independent protochlorophyllide reductase subunit N (443 aa).

3 residues coordinate [4Fe-4S] cluster: C15, C40, and C99.

This sequence belongs to the BchN/ChlN family. In terms of assembly, protochlorophyllide reductase is composed of three subunits; BchL, BchN and BchB. Forms a heterotetramer of two BchB and two BchN subunits. It depends on [4Fe-4S] cluster as a cofactor.

The enzyme catalyses chlorophyllide a + oxidized 2[4Fe-4S]-[ferredoxin] + 2 ADP + 2 phosphate = protochlorophyllide a + reduced 2[4Fe-4S]-[ferredoxin] + 2 ATP + 2 H2O. The protein operates within porphyrin-containing compound metabolism; bacteriochlorophyll biosynthesis (light-independent). Its function is as follows. Component of the dark-operative protochlorophyllide reductase (DPOR) that uses Mg-ATP and reduced ferredoxin to reduce ring D of protochlorophyllide (Pchlide) to form chlorophyllide a (Chlide). This reaction is light-independent. The NB-protein (BchN-BchB) is the catalytic component of the complex. The protein is Light-independent protochlorophyllide reductase subunit N of Heliobacterium modesticaldum (strain ATCC 51547 / Ice1).